A 519-amino-acid chain; its full sequence is Cell division cycle protein 20 homolog B (519 aa).

Over residues 79-98 (QSQTRALSSDSFGEEQSTTY) the composition is skewed to polar residues. Positions 79-133 (QSQTRALSSDSFGEEQSTTYLPEASGSVLKTPPEKETLTLGSRKEQLKTPSKGIS) are disordered. Basic and acidic residues predominate over residues 110–125 (PPEKETLTLGSRKEQL). 7 WD repeats span residues 229–266 (RNDYYLNILDWSFQNLVAIALGSAVYIWNGENHNGIEN), 271–310 (LTCNYISSVSWIKEGTCLAVGTSEGEVQLWDVVTKKRLRN), 311–341 (MLGHLSVVGALSWNHFILSSGSRLGRVYHHD), 353–392 (RHKQAVCALKWSPDGRLLSSGCSDGLLTIWPHDPGASAQG), 399–441 (TQST…SIQT), 443–484 (STNS…RSGG), and 487–519 (GHRGRVLHLSLSPDQTRVFSAAADGTASVWNCY).

This sequence belongs to the WD repeat CDC20/Fizzy family. Expressed in multiciliated cells (MCCs).

It is found in the cytoplasm. Protein regulator of centriole-deuterosome disengagement and subsequently participates in the ciliogenesis in multiciliated cells (MCCs). This Homo sapiens (Human) protein is Cell division cycle protein 20 homolog B.